Consider the following 33-residue polypeptide: Putative tumor antigen NA88-A (33 aa).

Expressed in testis and melanoma cell lines.

This chain is Putative tumor antigen NA88-A (VENTXP1), found in Homo sapiens (Human).